A 318-amino-acid chain; its full sequence is Acetyl-coenzyme A carboxylase carboxyl transferase subunit alpha (318 aa).

Positions 36 to 293 (EIDRLKEKST…KTRLSEQLDQ (258 aa)) constitute a CoA carboxyltransferase C-terminal domain.

This sequence belongs to the AccA family. In terms of assembly, acetyl-CoA carboxylase is a heterohexamer composed of biotin carboxyl carrier protein (AccB), biotin carboxylase (AccC) and two subunits each of ACCase subunit alpha (AccA) and ACCase subunit beta (AccD).

The protein resides in the cytoplasm. It carries out the reaction N(6)-carboxybiotinyl-L-lysyl-[protein] + acetyl-CoA = N(6)-biotinyl-L-lysyl-[protein] + malonyl-CoA. Its pathway is lipid metabolism; malonyl-CoA biosynthesis; malonyl-CoA from acetyl-CoA: step 1/1. In terms of biological role, component of the acetyl coenzyme A carboxylase (ACC) complex. First, biotin carboxylase catalyzes the carboxylation of biotin on its carrier protein (BCCP) and then the CO(2) group is transferred by the carboxyltransferase to acetyl-CoA to form malonyl-CoA. In Teredinibacter turnerae (strain ATCC 39867 / T7901), this protein is Acetyl-coenzyme A carboxylase carboxyl transferase subunit alpha.